A 390-amino-acid polypeptide reads, in one-letter code: Mevalonate kinase (390 aa).

Residues Lys-16, Ser-130, and Gly-135–Ser-141 contribute to the ATP site. Residues Ser-141 and Glu-193 each contribute to the Mg(2+) site. Asp-204 acts as the Proton acceptor in catalysis.

It belongs to the GHMP kinase family. Mevalonate kinase subfamily. It depends on Mg(2+) as a cofactor.

It is found in the cytoplasm. It catalyses the reaction (R)-mevalonate + ATP = (R)-5-phosphomevalonate + ADP + H(+). It functions in the pathway isoprenoid biosynthesis; isopentenyl diphosphate biosynthesis via mevalonate pathway; isopentenyl diphosphate from (R)-mevalonate: step 1/3. In terms of biological role, catalyzes the phosphorylation of mevalonate to mevalonate 5-phosphate, a key step in isoprenoid biosynthesis. This Dictyostelium discoideum (Social amoeba) protein is Mevalonate kinase.